The primary structure comprises 367 residues: MSLADSVLAVNNDLPIRTNSPVHSGKVRSVYWLTDADSRRLIQTKGYNVPEDTPLAIMVISDRISAFDCIFHGEGGLKGIPGKGAALNAISNHWFKLFAENGLADSHILDIPHPFVWIVQKARPIKVEAICRQYITGSMWRAYSKGERVFCGITLPEGLEKDQKLPDLLITPSTKGILTGIPGVPAQDDVNISRADIEANYQAFGFEKVEDIDLYEKLLKDGFKVISKALADLDQVFVDTKFEFGYVTDKNGNSKLIYMDEVGTPDSSRIWDGAAYRDGKILENSKEGFRQFLLNHFPDPDILLNKDRMPEREALARDNALPLEAMMNVSRTYTGIAEKVTGAAIPLPANPKADIIKILREEYDLIV.

This sequence belongs to the SAICAR synthetase family.

The catalysed reaction is 5-amino-1-(5-phospho-D-ribosyl)imidazole-4-carboxylate + L-aspartate + ATP = (2S)-2-[5-amino-1-(5-phospho-beta-D-ribosyl)imidazole-4-carboxamido]succinate + ADP + phosphate + 2 H(+). It participates in purine metabolism; IMP biosynthesis via de novo pathway; 5-amino-1-(5-phospho-D-ribosyl)imidazole-4-carboxamide from 5-amino-1-(5-phospho-D-ribosyl)imidazole-4-carboxylate: step 1/2. The polypeptide is Phosphoribosylaminoimidazole-succinocarboxamide synthase (Shewanella sp. (strain ANA-3)).